The chain runs to 232 residues: MGVGKSKLDKCPLSWHKKDSVDADQDGHESDSKNSEEACLRGFVEQSSGSEPPTGEQDQPEAKGAGPEEQDEEEFLKFVILHAEDDTDEALRVQDLLQNDFGIRPGIVFAEMPCGRLHLQNLDDAVNGSAWTILLLTENFLRDTWCNFQFYTSLMNSVSRQHKYNSVIPMRPLNSPLPRERTPLALQTINALEEESQGFSTQVERIFRESVFERQQSIWKETRSVSQKQFIA.

The segment covering 1–39 (MGVGKSKLDKCPLSWHKKDSVDADQDGHESDSKNSEEAC) has biased composition (basic and acidic residues). The disordered stretch occupies residues 1–70 (MGVGKSKLDK…EAKGAGPEEQ (70 aa)). G2 carries the N-myristoyl glycine lipid modification. The region spanning 74-226 (EFLKFVILHA…SIWKETRSVS (153 aa)) is the TIR domain. Phosphotyrosine is present on Y164.

As to quaternary structure, homodimer. Interacts with TLR4, TICAM1, IRF3 and IRF7 in response to LPS. Interacts with IL1R1, IL1RAP, IRAK2, IRAK3 and TRAF6. Interacts with protein kinase-inactive mutants of IRAK1 and IRAK4. Isoform 1 interacts with isoform 2; the interaction occurs in late endosomes and disrupts the interaction between isoform 1 and TICAM1. Interacts with MYD88; the interaction decreases after IL-18 stimulation in a time-dependent manner. Interacts with IL18R1 and IL18RAP. Interacts with TLR2. Interacts with RAB11FIP2. Myristoylated. Required for membrane association which is critical for its ability to initiate efficient signaling. Post-translationally, phosphorylated by PRKCE in response to LPS. Phosphorylation is essential for its function. It is depleted from the membrane upon phosphorylation. Tyrosine phosphorylation is inhibited by phosphatase PTPN4.

The protein localises to the cytoplasm. It localises to the golgi apparatus. It is found in the cell membrane. The protein resides in the early endosome. Its subcellular location is the late endosome. The protein localises to the endoplasmic reticulum. It localises to the cell projection. It is found in the phagocytic cup. Functionally, functions as a sorting adapter in different signaling pathways to facilitate downstream signaling leading to type I interferon induction. In TLR4 signaling, physically bridges TLR4 and TICAM1 and functionally transmits signal to TICAM1 in early endosomes after endocytosis of TLR4. In TLR2 signaling, physically bridges TLR2 and MYD88 and is required for the TLR2-dependent movement of MYD88 to endosomes following ligand engagement. Involved in IL-18 signaling and is proposed to function as a sorting adapter for MYD88 in IL-18 signaling during adaptive immune response. Forms a complex with RAB11FIP2 that is recruited to the phagosomes to promote the activation of the actin-regulatory GTPases RAC1 and CDC42 and subsequent phagocytosis of Gram-negative bacteria. This is TIR domain-containing adapter molecule 2 (Ticam2) from Mus musculus (Mouse).